Here is a 218-residue protein sequence, read N- to C-terminus: Replication protein RepB (218 aa).

The interval 1-26 is disordered; that stretch reads MKSESKIDWTVPRPNKNPKTKQPYKR. Basic residues predominate over residues 16–26; sequence KNPKTKQPYKR.

This sequence belongs to the Gram-positive plasmids replication protein type 2 family.

Its function is as follows. Is essential for plasmid replication. Nicks the positive strand at the plus origin of replication. The polypeptide is Replication protein RepB (repB) (Lactiplantibacillus plantarum (Lactobacillus plantarum)).